We begin with the raw amino-acid sequence, 1142 residues long: Probable serine/threonine-protein kinase fhkB (1142 aa).

Polar residues predominate over residues 1-16 (MSQDIQTQNSYSDELY). 3 disordered regions span residues 1-359 (MSQD…RLSQ), 374-404 (NTHT…KKQQ), and 432-451 (QIIG…QPPV). Composition is skewed to low complexity over residues 17-72 (SSQI…FSQN) and 83-157 (QNSY…PSSQ). Residues 158 to 178 (KRFFQSQNDDFVPSSQVTSLQ) show a composition bias toward polar residues. A coiled-coil region spans residues 186–302 (IQQQQQQQQQ…DYEQENDDDD (117 aa)). A compositionally biased stretch (low complexity) spans 187-260 (QQQQQQQQQQ…QQTQQQQQQP (74 aa)). Composition is skewed to acidic residues over residues 261-277 (QEDD…DNYE) and 283-325 (EGEE…EEES). Residues 333 to 348 (RALQSRSSQSRPLLRS) are compositionally biased toward low complexity. Residues 374–397 (NTHTNQLGQSSQQTNSPNVHFNSL) show a composition bias toward polar residues. Positions 393–434 (HFNSLQQKKKQQQQQQQQQQQQQQQQQQQQQQQQQQQSQQII) form a coiled coil. Residues 432–443 (QIIGSQSSQSSQ) show a composition bias toward low complexity. In terms of domain architecture, FHA spans 480 to 551 (IVVGRSSSCD…NGSYINGELI (72 aa)). The region spanning 625 to 885 (YYFVKEIGSG…IKEALNHPWF (261 aa)) is the Protein kinase domain. ATP-binding positions include 631–639 (IGSGGYGIV) and lysine 654. Aspartate 747 (proton acceptor) is an active-site residue. Residues 947 to 1142 (FDNNNNNNNN…HQQYTQHTTM (196 aa)) are disordered. Low complexity predominate over residues 949–1034 (NNNNNNNNNN…HNHNLNNHNH (86 aa)). Basic residues predominate over residues 1035 to 1067 (NNNHHHNHNHNHNHNHNHNHNHNHNHNHNHNHN). Over residues 1068-1133 (NHNNNNNNNN…NNINNNNNYH (66 aa)) the composition is skewed to low complexity. A coiled-coil region spans residues 1090–1132 (NNNNNNNNNNNNNNNNNNNNYYNNNINNINNNINNNINNNNNY).

This sequence belongs to the protein kinase superfamily. CAMK Ser/Thr protein kinase family. CHK2 subfamily.

The enzyme catalyses L-seryl-[protein] + ATP = O-phospho-L-seryl-[protein] + ADP + H(+). It carries out the reaction L-threonyl-[protein] + ATP = O-phospho-L-threonyl-[protein] + ADP + H(+). The sequence is that of Probable serine/threonine-protein kinase fhkB (fhkB) from Dictyostelium discoideum (Social amoeba).